The primary structure comprises 231 residues: NADH-ubiquinone oxidoreductase chain 4 (231 aa).

6 helical membrane passes run 1–21 (PIAG…YGMI), 34–54 (MFMP…LTCL), 63–85 (IAYS…TPWG), 89–111 (AMAL…NTTY), 128–148 (ILPM…AIPP), and 156–176 (FLIM…LGLS).

The protein belongs to the complex I subunit 4 family.

The protein localises to the mitochondrion membrane. It catalyses the reaction a ubiquinone + NADH + 5 H(+)(in) = a ubiquinol + NAD(+) + 4 H(+)(out). In terms of biological role, core subunit of the mitochondrial membrane respiratory chain NADH dehydrogenase (Complex I) that is believed to belong to the minimal assembly required for catalysis. Complex I functions in the transfer of electrons from NADH to the respiratory chain. The immediate electron acceptor for the enzyme is believed to be ubiquinone. The protein is NADH-ubiquinone oxidoreductase chain 4 (MT-ND4) of Bothriechis schlegelii (Eyelash palm pitviper).